The primary structure comprises 158 residues: NAD(P)H-quinone oxidoreductase subunit J, chloroplastic (158 aa).

It belongs to the complex I 30 kDa subunit family. In terms of assembly, NDH is composed of at least 16 different subunits, 5 of which are encoded in the nucleus.

It localises to the plastid. Its subcellular location is the chloroplast thylakoid membrane. The enzyme catalyses a plastoquinone + NADH + (n+1) H(+)(in) = a plastoquinol + NAD(+) + n H(+)(out). The catalysed reaction is a plastoquinone + NADPH + (n+1) H(+)(in) = a plastoquinol + NADP(+) + n H(+)(out). NDH shuttles electrons from NAD(P)H:plastoquinone, via FMN and iron-sulfur (Fe-S) centers, to quinones in the photosynthetic chain and possibly in a chloroplast respiratory chain. The immediate electron acceptor for the enzyme in this species is believed to be plastoquinone. Couples the redox reaction to proton translocation, and thus conserves the redox energy in a proton gradient. This Lactuca sativa (Garden lettuce) protein is NAD(P)H-quinone oxidoreductase subunit J, chloroplastic.